Reading from the N-terminus, the 387-residue chain is Formate-dependent phosphoribosylglycinamide formyltransferase (387 aa).

Residues 21–22 (EL) and E81 each bind N(1)-(5-phospho-beta-D-ribosyl)glycinamide. Residues R113, K154, 159–164 (SSGHGQ), 193–196 (EEFV), and E201 each bind ATP. Residues 118–306 (VFAAETLDLK…EFALHVRAVL (189 aa)) form the ATP-grasp domain. Positions 265 and 277 each coordinate Mg(2+). N(1)-(5-phospho-beta-D-ribosyl)glycinamide-binding positions include D284, K352, and 359–360 (RR).

This sequence belongs to the PurK/PurT family. As to quaternary structure, homodimer.

It catalyses the reaction N(1)-(5-phospho-beta-D-ribosyl)glycinamide + formate + ATP = N(2)-formyl-N(1)-(5-phospho-beta-D-ribosyl)glycinamide + ADP + phosphate + H(+). Its pathway is purine metabolism; IMP biosynthesis via de novo pathway; N(2)-formyl-N(1)-(5-phospho-D-ribosyl)glycinamide from N(1)-(5-phospho-D-ribosyl)glycinamide (formate route): step 1/1. Involved in the de novo purine biosynthesis. Catalyzes the transfer of formate to 5-phospho-ribosyl-glycinamide (GAR), producing 5-phospho-ribosyl-N-formylglycinamide (FGAR). Formate is provided by PurU via hydrolysis of 10-formyl-tetrahydrofolate. The chain is Formate-dependent phosphoribosylglycinamide formyltransferase from Sulfurovum sp. (strain NBC37-1).